The following is a 1010-amino-acid chain: Retinoblastoma-related protein 1 (1010 aa).

Residues 1–23 (MEGAAPPASSGSEVTGAGSGKVD) are disordered. The domain A stretch occupies residues 419-619 (TPVSTAMTTA…EKGSSMYNSL (201 aa)). Residues 419-861 (TPVSTAMTTA…NEVFIPTVKP (443 aa)) form a pocket region. The spacer stretch occupies residues 620–730 (IVARPTLSAE…PAAGGELCAE (111 aa)). The interval 657–679 (LPPLPFQKQEHSPDKDEVRSPKR) is disordered. Residues 664-679 (KQEHSPDKDEVRSPKR) show a composition bias toward basic and acidic residues. Residues 731–861 (TGIGVFLSKI…NEVFIPTVKP (131 aa)) form a domain B region. A disordered region spans residues 868-898 (SGTSPNKKNEEKCAADGPYPESPRLSRFPNL).

This sequence belongs to the retinoblastoma protein (RB) family.

It localises to the nucleus. Regulator of biological processes that recruits a histone deacetylase to control gene transcription. May play a role in the entry into mitosis, negatively regulating the cell proliferation. Formation of stable complexes with geminiviridae replication-associated proteins may create a cellular environment which favors viral DNA replication. The protein is Retinoblastoma-related protein 1 (RBR1) of Oryza sativa subsp. japonica (Rice).